Here is a 155-residue protein sequence, read N- to C-terminus: Transcriptional regulator MraZ (155 aa).

SpoVT-AbrB domains lie at 15 to 62 and 93 to 136; these read TYEN…GMDR and SEEL…NPTA.

It belongs to the MraZ family. In terms of assembly, forms oligomers.

Its subcellular location is the cytoplasm. It is found in the nucleoid. The sequence is that of Transcriptional regulator MraZ from Rhodospirillum rubrum (strain ATCC 11170 / ATH 1.1.1 / DSM 467 / LMG 4362 / NCIMB 8255 / S1).